The primary structure comprises 541 residues: EH domain-containing protein 4 (541 aa).

N-acetylmethionine is present on M1. One can recognise a Dynamin-type G domain in the interval 58–289 (FENKPMILLV…DLFRDIQSLP (232 aa)). The G1 motif stretch occupies residues 68 to 75 (GQYSTGKT). 68–75 (GQYSTGKT) serves as a coordination point for ATP. The G2 motif stretch occupies residues 94–95 (EP). A G3 motif region spans residues 156-159 (DSPG). Position 162 is a phosphoserine (S162). Positions 222 to 225 (NKAD) are G4 motif. Residue K223 coordinates ATP. A region of interest (G5 motif) is located at residue V246. Residue W261 coordinates ATP. Positions 447 to 535 (DKPVYDELFY…PHLVPPSHRK (89 aa)) constitute an EH domain. A Phosphotyrosine modification is found at Y451. Phosphoserine is present on S459. Residues 479 to 514 (LPNSVLGKIWKLADCDCDGMLDEEEFALAKHLIKIK) form the EF-hand domain. D492, D494, D496, M498, and E503 together coordinate Ca(2+).

The protein belongs to the TRAFAC class dynamin-like GTPase superfamily. Dynamin/Fzo/YdjA family. EHD subfamily. Homooligomer, and heterooligomer with EHD1, EHD2 and EHD3. Forms a complex with EHD4 and MICALL1; the complex controls CDH5 trafficking and coordinates angiogenesis. As to expression, highly expressed in pancreas and heart.

The protein resides in the early endosome membrane. Its subcellular location is the recycling endosome membrane. It localises to the cell membrane. The protein localises to the cell junction. It is found in the adherens junction. Functionally, ATP- and membrane-binding protein that probably controls membrane reorganization/tubulation upon ATP hydrolysis. Plays a role in early endosomal transport. During sprouting angiogenesis, in complex with PACSIN2 and MICALL1, forms recycling endosome-like tubular structure at asymmetric adherens junctions to control CDH5 trafficking. The chain is EH domain-containing protein 4 from Homo sapiens (Human).